A 276-amino-acid chain; its full sequence is MAIRVYKPTTAGRRNASVSDFSELTRSTPEKSLVRKKSKTGGRNSYGRITSRHRGGGHKRQYRLIDFKRWDKDGVPAKVAEIEYDPNRSARIALLHFADGEKRYIIAPKGIKQGDVIETGAQADIKPGNNLPLKNIPTGTVVHAIELRPLGGAKIARSAGAAVQLVAKDGAYAQLRMPSGEIRNVDARCRATVGEVGNEDHANIQLGKAGRARWIGHRPITRGESMNPVDHPHGGRTRGGKPPVSPWGKGEVRTRRPKKASNKMIVRRRPSGKNRK.

Disordered regions lie at residues 14–58 (RNAS…GGGH) and 221–276 (TRGE…KNRK). Over residues 16–27 (ASVSDFSELTRS) the composition is skewed to polar residues. A compositionally biased stretch (basic residues) spans 255-276 (RRPKKASNKMIVRRRPSGKNRK).

The protein belongs to the universal ribosomal protein uL2 family. In terms of assembly, part of the 50S ribosomal subunit. Forms a bridge to the 30S subunit in the 70S ribosome.

One of the primary rRNA binding proteins. Required for association of the 30S and 50S subunits to form the 70S ribosome, for tRNA binding and peptide bond formation. It has been suggested to have peptidyltransferase activity; this is somewhat controversial. Makes several contacts with the 16S rRNA in the 70S ribosome. This is Large ribosomal subunit protein uL2 from Bifidobacterium longum subsp. infantis (strain ATCC 15697 / DSM 20088 / JCM 1222 / NCTC 11817 / S12).